Consider the following 214-residue polypeptide: Guanylate kinase (214 aa).

The Guanylate kinase-like domain occupies 6 to 192; the sequence is GTLYIISAPS…ALEDLKSIFR (187 aa). 13-20 contributes to the ATP binding site; that stretch reads APSGAGKT.

Belongs to the guanylate kinase family.

It localises to the cytoplasm. It carries out the reaction GMP + ATP = GDP + ADP. Essential for recycling GMP and indirectly, cGMP. This Pseudomonas syringae pv. tomato (strain ATCC BAA-871 / DC3000) protein is Guanylate kinase.